The chain runs to 250 residues: Thioesterase FPSE_09186 (250 aa).

Belongs to the AMT4 thioesterase family.

It functions in the pathway secondary metabolite biosynthesis. Its function is as follows. Thioesterase; part of the gene cluster that mediates the biosynthesis of the lipopeptides W493 A and B. W493 A and B consist of six amino acid residues D-allo-thr, L-Ala, D-Ala, L-Gln, D-Tyr, and L-Val/L-Ile linked to a 3-hydroxy-4-methyltetradecanoic acid polyketide chain. The biosynthesis starts with formation of the linear polyketide chain by the highly reducing polyketide synthase PKS40. The gene cluster contains a putative acyl-CoA ligase (FPSE_09184) for formation of a CoA thioester polyketide. The thiol bond could be hydrolyzed by the putative thioesterase (FPSE_09186) and then accepted by the first T domain in module 1 of NRPS32. The second T domain is responsible for accepting a threonine, which is adenylated by the A domain and epimerized to the D-allo-threonine formed by the E domain. The five successive modules incorporate Ala, Ala, Gln, Tyr, and Val/Ile into the final product, which is released by cyclization. In Fusarium pseudograminearum (strain CS3096) (Wheat and barley crown-rot fungus), this protein is Thioesterase FPSE_09186.